The chain runs to 440 residues: tRNA-2-methylthio-N(6)-dimethylallyladenosine synthase (440 aa).

In terms of domain architecture, MTTase N-terminal spans 3–119 (KKFFIKTFGC…LPELINQAQA (117 aa)). [4Fe-4S] cluster is bound by residues Cys-12, Cys-48, Cys-82, Cys-158, Cys-162, and Cys-165. Residues 144 to 374 (RDNKYCAYVT…LELQKSILSE (231 aa)) form the Radical SAM core domain. The TRAM domain occupies 377 to 437 (KKYEGTVQEV…PFSLEGELLE (61 aa)).

The protein belongs to the methylthiotransferase family. MiaB subfamily. In terms of assembly, monomer. It depends on [4Fe-4S] cluster as a cofactor.

The protein localises to the cytoplasm. It carries out the reaction N(6)-dimethylallyladenosine(37) in tRNA + (sulfur carrier)-SH + AH2 + 2 S-adenosyl-L-methionine = 2-methylsulfanyl-N(6)-dimethylallyladenosine(37) in tRNA + (sulfur carrier)-H + 5'-deoxyadenosine + L-methionine + A + S-adenosyl-L-homocysteine + 2 H(+). Catalyzes the methylthiolation of N6-(dimethylallyl)adenosine (i(6)A), leading to the formation of 2-methylthio-N6-(dimethylallyl)adenosine (ms(2)i(6)A) at position 37 in tRNAs that read codons beginning with uridine. This Aquifex aeolicus (strain VF5) protein is tRNA-2-methylthio-N(6)-dimethylallyladenosine synthase.